The following is a 471-amino-acid chain: Mannose-1-phosphate guanylyltransferase (471 aa).

This sequence belongs to the mannose-6-phosphate isomerase type 2 family.

It carries out the reaction alpha-D-mannose 1-phosphate + GTP + H(+) = GDP-alpha-D-mannose + diphosphate. It functions in the pathway nucleotide-sugar biosynthesis; GDP-alpha-D-mannose biosynthesis; GDP-alpha-D-mannose from alpha-D-mannose 1-phosphate (GTP route): step 1/1. Involved in the biosynthesis of the K2 capsular polysaccharide biosynthesis. The sequence is that of Mannose-1-phosphate guanylyltransferase (manC) from Klebsiella pneumoniae.